The primary structure comprises 532 residues: Spore coat protein SP85 (532 aa).

The signal sequence occupies residues 1 to 19 (MRLLSVLLIGFLCLAGTYA). N47 carries N-linked (GlcNAc...) asparagine glycosylation. Residues 197–265 (TQSPTQPPTQ…PTQPPTQPPV (69 aa)) form a disordered region. The span at 201 to 263 (TQPPTQPPTY…YPPTQPPTQP (63 aa)) shows a compositional bias: pro residues. Residues 267-289 (DCSTLECPEGFHCEIVNNRRTCV) form the Follistatin-like 1 domain. The disordered stretch occupies residues 297 to 320 (THPPTQSPTYPPTQPPTQPPTYPP). 3 consecutive Follistatin-like domains span residues 335–359 (SCDN…ARCV), 400–423 (TCDQ…VFCV), and 430–452 (TCKQ…LHCV).

Binds to cotE. In terms of processing, O-glycosylated.

The protein resides in the spore wall. In terms of biological role, required for incorporation of cotE into the spore coat and for the formation of the outer layer. Has a cross-bridging function between cellulose and other coat proteins. This Dictyostelium discoideum (Social amoeba) protein is Spore coat protein SP85 (pspB).